A 167-amino-acid polypeptide reads, in one-letter code: Leukotoxin-activating lysine-acyltransferase LktC serotype T3 (167 aa).

Catalysis depends on residues His-22 and Asp-91.

This sequence belongs to the RTX toxin acyltransferase family.

It is found in the cytoplasm. The enzyme catalyses a fatty acyl-[ACP] + L-lysyl-[protein] = N(6)-(fatty acyl)-L-lysyl-[protein] + holo-[ACP] + H(+). In terms of biological role, involved in fatty acylation of the protoxin (LktA) at two internal lysine residues, thereby converting it to the active toxin. The sequence is that of Leukotoxin-activating lysine-acyltransferase LktC serotype T3 (lktC) from Mannheimia haemolytica (Pasteurella haemolytica).